The chain runs to 363 residues: Adenosine deaminase (363 aa).

Residues His42 and His44 each coordinate Zn(2+). A purine D-ribonucleoside-binding positions include 44–46, Asp172, and Gly201; that span reads HLD. The interval 170-184 is gating helix loop; regulates binding affinity for substrates and thus substrate selectivity; sequence IGDTGHEAANIKASA. Residue His226 participates in Zn(2+) binding. A purine D-ribonucleoside contacts are provided by Glu229, His253, and Asp310. Asp310 provides a ligand contact to Zn(2+).

Belongs to the metallo-dependent hydrolases superfamily. Adenosine and AMP deaminases family. Zn(2+) is required as a cofactor.

The catalysed reaction is adenosine + H2O + H(+) = inosine + NH4(+). It catalyses the reaction S-methyl-5'-thioadenosine + H2O + H(+) = S-methyl-5'-thioinosine + NH4(+). The protein operates within purine metabolism; purine nucleoside salvage. With respect to regulation, inhibited by coformycin and methylthiocoformycin (MT-coformycin). In terms of biological role, catalyzes the hydrolytic deamination of adenosine to produce inosine. Unlike mammalian adenosine deaminases, also catalyzes the deamination of 5'-methylthioadenosine (MTA), a by-product of polyamine biosynthesis, to produce 5'-methylthioinosine (MTI). Plays an essential role in the purine salvage pathway which allows the parasite to use host cell purines for the synthesis of nucleic acids. In Plasmodium cynomolgi (strain B), this protein is Adenosine deaminase.